A 383-amino-acid chain; its full sequence is Nuclear hormone receptor family member nhr-217 (383 aa).

Residues 53-127 constitute a DNA-binding region (nuclear receptor); the sequence is IPACPVCDVP…AGLQRDYVRQ (75 aa). 2 NR C4-type zinc fingers span residues 56–77 and 93–109; these read CPVC…CAAC and CKRE…CRAC. Residues 172–383 enclose the NR LBD domain; that stretch reads ILKVSNSSLF…KLYVQIGIPF (212 aa).

The protein belongs to the nuclear hormone receptor family.

Its subcellular location is the nucleus. Its function is as follows. Orphan nuclear receptor. The chain is Nuclear hormone receptor family member nhr-217 (nhr-217) from Caenorhabditis elegans.